Here is a 185-residue protein sequence, read N- to C-terminus: UPF0397 protein PAM_019 (185 aa).

The next 5 helical transmembrane spans lie at 13 to 33, 42 to 62, 69 to 89, 109 to 129, and 143 to 163; these read IGLS…PVGF, AFLA…VGLI, FILF…IGFI, IVYF…FFAP, and VYLQ…VVGI.

This sequence belongs to the UPF0397 family.

It is found in the cell membrane. The chain is UPF0397 protein PAM_019 from Onion yellows phytoplasma (strain OY-M).